A 499-amino-acid polypeptide reads, in one-letter code: MTDIKRNFSDIASPANLDDTKKLHVDSTATTKVGRKPIDTEPKSKRTAQNRAAQRAYRERKERKMKELEDKVRLLEDANVRALTETDFLRAQVDVLKNELAKYTGGSDFSDLNLPTKVGHLSHPNNHHSNVSTGTPHGSMSSSNSVASLDNDKPSSASSVSNNSPGFAFDNPWSKDNIQKLKHQHQQQQQKVPQGVPDLVSGSSSSSTPLNDNLLVTPESLTGLSTSSKYTGQNNVPTNLDFTNQFDEQVDPFCVKLNEACGTKSNPVPKFKRSGSKANTSVTNNSPLAHLVSPESQQYTNSSNIDFMNDPFFNGVGTDYNFNFDSKNGSIQDPLSFLQDDNFDLALAFGDPSPTGNEAEADPISLLTTEESIYDPLTNNSDKLCSTVKADDVNTDFNFNDFVKNSLPEKQEKGKYEPPSTSKTTNNNEEEDKDEVVPAPPQTLKCSEIWDRITSHPKYTELDIDGLCNELKSKAKCSEKGVVINTADVNQLLERSIKH.

A disordered region spans residues 1–64 (MTDIKRNFSD…RAYRERKERK (64 aa)). 2 short sequence motifs (bipartite nuclear localization signal) span residues 20–27 (TKKLHVDS) and 44–51 (SKRTAQNR). The bZIP domain maps to 40–103 (TEPKSKRTAQ…DVLKNELAKY (64 aa)). Residues 43–66 (KSKRTAQNRAAQRAYRERKERKMK) form a basic motif region. The stretch at 49-105 (QNRAAQRAYRERKERKMKELEDKVRLLEDANVRALTETDFLRAQVDVLKNELAKYTG) forms a coiled coil. The tract at residues 68–75 (LEDKVRLL) is leucine-zipper. The interval 104–215 (TGGSDFSDLN…SSTPLNDNLL (112 aa)) is disordered. The segment covering 123–148 (HPNNHHSNVSTGTPHGSMSSSNSVAS) has biased composition (polar residues). Composition is skewed to low complexity over residues 155 to 164 (SSASSVSNNS) and 186 to 215 (QQQQ…DNLL). The interval 254–261 (CVKLNEAC) is n-CRD. Cystine bridges form between C254/C446 and C261/C477. Residues 408-442 (PEKQEKGKYEPPSTSKTTNNNEEEDKDEVVPAPPQ) form a disordered region. Low complexity predominate over residues 417-427 (EPPSTSKTTNN). The interval 446–477 (CSEIWDRITSHPKYTELDIDGLCNELKSKAKC) is c-CRD. The short motif at 462 to 469 (LDIDGLCN) is the Nuclear export signal element.

The protein belongs to the bZIP family. YAP subfamily. In terms of assembly, interacts with YBP1. In terms of processing, upon oxidative stress, is oxidated by the peroxidase GPX3 and stabilized by YBP1. Oxidative stress induces conformational changes through oxidation of cysteine residues, masking the nuclear export signal, thus abolishing nuclear export by CRM1/exportin 1. Phosphorylated in response to H(2)O(2).

The protein resides in the nucleus. It localises to the cytoplasm. Transcription activator involved in multidrug resistance, oxidative stress response, and redox homeostasis. Preferentially binds to promoters with the core binding site 5'-TTA[CG]TAA-3'. Involved in the oxidative stress response in via multiple pathways, including the cellular antioxidant defense system, carbohydrate metabolism and energy metabolism, protein degradation, ATP-dependent RNA helicase, and resistance pathways. The ability of the major systemic fungal pathogen of humans to sense and respond to reactive oxygen species, such as H(2)O(2) generated by the host immune system, is required for survival in the host and therefore virulence. Regulates the transcription of COR33, GLR1, GTO1, GTT1, GTT1, TRR1, TRX1, SOD1, CAT1, and the transcription regulator TSA1. Participates in the apoptosis by regulating the expression of the glutathione reductase gene and glutathione content. Also plays a role in the peroxide-mediated induction of MDR1 and other drug response genes such as PDR16, MDR1, FLU1, YCF1, and FCR1. Regulates trehalose accumulation which is important for the oxidative stress tolerance. Recruits ADA2 to its target promoters. Activity of CAP1 is controlled through oxidation of specific cysteine residues resulting in the alteration of its subcellular location. Oxidative stress induces nuclear accumulation and as a result CAP1 transcriptional activity. Nuclear export is restored when disulfide bonds are reduced by thioredoxin, whose expression is controlled by CAP1, providing a mechanism for negative autoregulation. This chain is AP-1-like transcription factor CAP1, found in Candida albicans (strain SC5314 / ATCC MYA-2876) (Yeast).